We begin with the raw amino-acid sequence, 230 residues long: 2,3-bisphosphoglycerate-dependent phosphoglycerate mutase (230 aa).

Residues 10–17, 23–24, R62, 89–92, K100, 116–117, and 185–186 contribute to the substrate site; these read RHGESKWN, TG, ERNY, RR, and GN. H11 serves as the catalytic Tele-phosphohistidine intermediate. The Proton donor/acceptor role is filled by E89.

This sequence belongs to the phosphoglycerate mutase family. BPG-dependent PGAM subfamily. Homodimer.

It carries out the reaction (2R)-2-phosphoglycerate = (2R)-3-phosphoglycerate. Its pathway is carbohydrate degradation; glycolysis; pyruvate from D-glyceraldehyde 3-phosphate: step 3/5. Catalyzes the interconversion of 2-phosphoglycerate and 3-phosphoglycerate. In Buchnera aphidicola subsp. Cinara cedri (strain Cc), this protein is 2,3-bisphosphoglycerate-dependent phosphoglycerate mutase.